A 176-amino-acid polypeptide reads, in one-letter code: 3-hydroxyanthranilate 3,4-dioxygenase (176 aa).

Position 44 (arginine 44) interacts with O2. Fe cation contacts are provided by histidine 48, glutamate 54, and histidine 92. Glutamate 54 provides a ligand contact to substrate. Residues arginine 96 and glutamate 106 each coordinate substrate. Fe cation is bound by residues cysteine 121, cysteine 124, cysteine 158, and cysteine 161.

This sequence belongs to the 3-HAO family. Homodimer. The cofactor is Fe(2+).

It carries out the reaction 3-hydroxyanthranilate + O2 = (2Z,4Z)-2-amino-3-carboxymuconate 6-semialdehyde. Its pathway is cofactor biosynthesis; NAD(+) biosynthesis; quinolinate from L-kynurenine: step 3/3. Functionally, catalyzes the oxidative ring opening of 3-hydroxyanthranilate to 2-amino-3-carboxymuconate semialdehyde, which spontaneously cyclizes to quinolinate. This Xanthomonas euvesicatoria pv. vesicatoria (strain 85-10) (Xanthomonas campestris pv. vesicatoria) protein is 3-hydroxyanthranilate 3,4-dioxygenase.